A 340-amino-acid chain; its full sequence is Fructose-1,6-bisphosphatase class 1 (340 aa).

The Mg(2+) site is built by E107, D126, L128, and D129. N215 serves as a coordination point for substrate. E287 provides a ligand contact to Mg(2+).

It belongs to the FBPase class 1 family. As to quaternary structure, homotetramer. The cofactor is Mg(2+).

The protein resides in the cytoplasm. The catalysed reaction is beta-D-fructose 1,6-bisphosphate + H2O = beta-D-fructose 6-phosphate + phosphate. The protein operates within carbohydrate biosynthesis; gluconeogenesis. This is Fructose-1,6-bisphosphatase class 1 from Brucella anthropi (strain ATCC 49188 / DSM 6882 / CCUG 24695 / JCM 21032 / LMG 3331 / NBRC 15819 / NCTC 12168 / Alc 37) (Ochrobactrum anthropi).